A 78-amino-acid polypeptide reads, in one-letter code: UPF0270 protein IL0325 (78 aa).

Belongs to the UPF0270 family.

The polypeptide is UPF0270 protein IL0325 (Idiomarina loihiensis (strain ATCC BAA-735 / DSM 15497 / L2-TR)).